We begin with the raw amino-acid sequence, 1083 residues long: MSVIYRAHRVAIANRTASRNVRVARWVAAIAGLIGFVSSVVTPLLPVVQTTATLNWPQNGQLNSVTAPLISLTPVDITATVPCAVVAALPPSGGVVLGTAPKQGKDANLNALFIDVNSQRVDVTDRNVVILSVPRNQVAGDAGAPGCSSIEVTSTHAGTFATFVGVTDSAGNPLRGGFPDPNLRPQIVGVFTDLTGGAPSGLRLSATIDTRFSSTPTTLKRFAMMLAIITTVGALVALWRLDQLDGRRMRRLIPARWSMFTLVDVAVIFGFLLWHVIGANSSDDGYQMQMARTADHSGYMANYFRWFGSPEDPFGWYYNLLALMIHVSDASMWIRLPDLICGVACWLLLSREVLPRLGPAIVGFKPALWAAGLVLLAAWMPFNNGLRPEGQIALGALITYVLIERAITYGRMTPVALATLTAAFTIGIQPTGLIAVAALLAGGRPMLYILVRRHRAVGAWPLVAPLLAAGTVVLTVVFAEQTLSTVLEATKVRTAIGPAQAWYTENLRYYYLILPTVDGSLSRRFGFLITALCLFTAVLITLRRKQIPGVARGPAWRLIGTILGTMFFLTFAPTKWVHHFGLFAALGAAVAALTTVLVSHEVLRWSRNRMAFLAALLFVMTLCFATTNGWWYVSSYGVPFNSAMPRIDGITFSTIFFILFAIVALYAYYLHFTNTGHGEGRLIRTLTVSFWAPIPFAAGLMTLVFIGSMVAGIVRQYPTYSNGWANIRALTGGCGLADDVLVEPDSNAGYMTALPSNYGPLGPLGGVNAIGFTANGVPEHTVAEAIRITPNQPGTDYDWEAPTKLKAPGINGSVVPLPYGLNPNKVPIAGTYTTGAQQQSRLTSAWYQLPKPDDRHPLVVVTAAGKITGNSVLHGHTYGQTVVLEYGDPGPNGGLVPAGRLVPDDLYGEQPKAWRNLRFARSQMPFDAVAVRVVAENLSLTPEDWIAVTPPRVPELRSLQEYVGSSQPVLLDWEVGLAFPCQQPMLHANGVTDIPKFRITPDYSAKKIDTDTWEDGANGGLLGITDLLLRAHVMSTYLARDWGRDWGSLRKFDPLVDTHPAQLDLDTATRSGWWSPGKIRIKP.

13 consecutive transmembrane segments (helical) span residues 23–45 (VARWVAAIAGLIGFVSSVVTPLL), 222–239 (FAMMLAIITTVGALVALW), 252–274 (LIPARWSMFTLVDVAVIFGFLLW), 331–350 (SMWIRLPDLICGVACWLLLS), 357–379 (LGPAIVGFKPALWAAGLVLLAAW), 421–443 (TAAFTIGIQPTGLIAVAALLAGG), 456–478 (AVGAWPLVAPLLAAGTVVLTVVF), 525–542 (FGFLITALCLFTAVLITL), 555–572 (AWRLIGTILGTMFFLTFA), 576–598 (WVHHFGLFAALGAAVAALTTVLV), 611–633 (AFLAALLFVMTLCFATTNGWWYV), 648–670 (DGITFSTIFFILFAIVALYAYYL), and 690–712 (FWAPIPFAAGLMTLVFIGSMVAG).

The protein belongs to the emb family.

The protein resides in the cell membrane. In terms of biological role, arabinosyl transferase responsible for the polymerization of arabinose into the arabinan of arabinogalactan. This chain is Probable arabinosyltransferase B (embB), found in Mycobacterium leprae (strain TN).